The chain runs to 385 residues: AA13 family lytic polysaccharide monooxygenase aasA (385 aa).

An N-terminal signal peptide occupies residues Met-1–Gly-18. His-19 serves as a coordination point for Cu(2+). His-19 carries the post-translational modification Methylhistidine. The interval His-19–Ile-248 is N-terminal catalytic module. 7 disulfide bridges follow: Cys-40–Cys-43, Cys-66–Cys-245, Cys-102–Cys-203, Cys-118–Cys-145, Cys-153–Cys-161, Cys-167–Cys-173, and Cys-181–Cys-192. His-109 is a binding site for Cu(2+). An N-linked (GlcNAc...) asparagine glycan is attached at Asn-120. Tyr-242 serves as a coordination point for Cu(2+). Positions Ser-254–Thr-276 are disordered. Over residues Ser-256 to Thr-276 the composition is skewed to low complexity. Residues Cys-278–Arg-385 form the CBM20 domain. N-linked (GlcNAc...) asparagine glycosylation is present at Asn-364.

It belongs to the polysaccharide monooxygenase AA13 family. Requires Cu(2+) as cofactor. Post-translationally, the catalytically essential N-terminal histidine His-19 is post-translationally modified by methylation to prevent protonation of the histidine side chain, and protect the critical active site of the enzyme from oxidative damage.

The protein localises to the secreted. The catalysed reaction is starch + reduced acceptor + O2 = D-glucono-1,5-lactone-terminated malto-oligosaccharides + short-chain malto-oligosaccharides + acceptor + H2O.. In terms of biological role, starch-active polysaccharide monooxygenase that oxidizes the C1 position of starch substrates, but not in cellulose, chitin, polygalacturonan or esterified pectin, nor with Arabidopsis stem cell walls. Catalysis by LPMOs requires the reduction of the active-site copper from Cu(II) to Cu(I) by a reducing agent and H(2)O(2) or O(2) as a cosubstrate. This Emericella nidulans (strain FGSC A4 / ATCC 38163 / CBS 112.46 / NRRL 194 / M139) (Aspergillus nidulans) protein is AA13 family lytic polysaccharide monooxygenase aasA.